The following is a 252-amino-acid chain: Ubiquinone/menaquinone biosynthesis C-methyltransferase UbiE (252 aa).

S-adenosyl-L-methionine is bound by residues T71, D100, 124-125 (DA), and S141.

It belongs to the class I-like SAM-binding methyltransferase superfamily. MenG/UbiE family.

It carries out the reaction a 2-demethylmenaquinol + S-adenosyl-L-methionine = a menaquinol + S-adenosyl-L-homocysteine + H(+). It catalyses the reaction a 2-methoxy-6-(all-trans-polyprenyl)benzene-1,4-diol + S-adenosyl-L-methionine = a 5-methoxy-2-methyl-3-(all-trans-polyprenyl)benzene-1,4-diol + S-adenosyl-L-homocysteine + H(+). Its pathway is quinol/quinone metabolism; menaquinone biosynthesis; menaquinol from 1,4-dihydroxy-2-naphthoate: step 2/2. The protein operates within cofactor biosynthesis; ubiquinone biosynthesis. In terms of biological role, methyltransferase required for the conversion of demethylmenaquinol (DMKH2) to menaquinol (MKH2) and the conversion of 2-polyprenyl-6-methoxy-1,4-benzoquinol (DDMQH2) to 2-polyprenyl-3-methyl-6-methoxy-1,4-benzoquinol (DMQH2). This chain is Ubiquinone/menaquinone biosynthesis C-methyltransferase UbiE, found in Caulobacter vibrioides (strain ATCC 19089 / CIP 103742 / CB 15) (Caulobacter crescentus).